A 625-amino-acid chain; its full sequence is MPRHGVSPGQGLPRSGREQASDRSLGAPCLRLLWLGLALALALPNSPVLWSPAEARPLPTQGHPAKFIRIAPQLQEAFGWWNLTCPTCKGLFTAIDFGLRNQASVAWVGSVAIKLCVLLKIAPPAVCQSAVQLFEDDMVEVWTRSVLSPSEACGLLLGSSCGHWDIFSSWNISLPAVPKPPPQPPKPPAPGSPVSRVLFLTDLHWDHDYLEGTDPNCENPLCCRRDSGPPPASQPGAGYWGEYSKCDLPLRTLESLLSGLGPAGPFDMVYWTGDIPAHNIWQQSRQDQLRALTTITALVKKFLGPVPVYPAVGNHESTPVNGFPPPFIKGNQSSHWLYEAMAEAWEPWLPAEALRTLRIGGFYALSPRPGLRLISLNMNFCSRENFWLLINSTDPAGQLQWLVGELQAAEDRGDKVHIIGHIPPGHCLKSWSWNYYRIVERYENTLAGQFFGHTHVDEFEVFYDEETLSRPLSVAFLAPSATTYIGLNPGYRVYQIDGNYSGSSHVVLDHETYIMNLTEANEPGATPHWYLLYRARETYGLPNALPTAWHDLVYRMRKDTQLFQTFWFLYHKGHPPSEPCGTPCRLATLCAQLSARSDSPALCRHLVPDASLPDVQSLWSMPLLC.

Positions 1–20 are disordered; it reads MPRHGVSPGQGLPRSGREQA. An N-terminal signal peptide occupies residues 1 to 40; the sequence is MPRHGVSPGQGLPRSGREQASDRSLGAPCLRLLWLGLALA. Residues 81–165 form the Saposin B-type domain; that stretch reads WNLTCPTCKG…LLGSSCGHWD (85 aa). N82 carries an N-linked (GlcNAc...) asparagine glycan. Cystine bridges form between C85/C161, C88/C153, and C116/C127. N-linked (GlcNAc...) asparagine glycosylation is present at N171. Positions 202 and 204 each coordinate Zn(2+). 2 cysteine pairs are disulfide-bonded: C217–C222 and C223–C246. Zn(2+) is bound by residues D274 and N314. 2 N-linked (GlcNAc...) asparagine glycosylation sites follow: N331 and N391. A disulfide bridge connects residues C381 and C427. The Zn(2+) site is built by H421, H453, and H455. N-linked (GlcNAc...) asparagine glycosylation occurs at N499. S504 is subject to Phosphoserine. N516 carries an N-linked (GlcNAc...) asparagine glycan. 2 disulfides stabilise this stretch: C580/C584 and C590/C603.

It belongs to the acid sphingomyelinase family. Monomer. Interacts with SORT1; the interaction is required for SMPD1 targeting to lysosomes. Zn(2+) serves as cofactor. Proteolytically processed. Mature lysosomal form arises from C-terminal proteolytic processing of pro-sphingomyelin phosphodiesterase. Post-translationally, both lysosomal and secreted forms are glycosylated but they show a differential pattern of glycosylation. In terms of processing, phosphorylated at Ser-504 by PRKCD upon stress stimuli. Phosphorylation is required for secretion. This form is generated following cleavage by CASP7 in the extracellular milieu. It shows increased activity.

Its subcellular location is the lysosome. It is found in the lipid droplet. It localises to the secreted. The protein localises to the extracellular space. It carries out the reaction a sphingomyelin + H2O = phosphocholine + an N-acylsphing-4-enine + H(+). The catalysed reaction is N-(octadecanoyl)-sphing-4-enine-1-phosphocholine + H2O = N-octadecanoylsphing-4-enine + phosphocholine + H(+). It catalyses the reaction a 1,2-diacyl-sn-glycero-3-phosphocholine + H2O = phosphocholine + a 1,2-diacyl-sn-glycerol + H(+). The enzyme catalyses 1,2-dihexadecanoyl-sn-glycero-3-phosphocholine + H2O = 1,2-dihexadecanoyl-sn-glycerol + phosphocholine + H(+). With respect to regulation, hydrolysis of liposomal sphingomyelin is stimulated by incorporation of diacylglycerol (DAG), ceramide and free fatty acids into the liposomal membranes. Phosphatidylcholine hydrolysis is inhibited by incorporation of cholesterol, ceramide, DAG, monoacylglycerol and fatty acids. Its function is as follows. Converts sphingomyelin to ceramide. Exists as two enzymatic forms that arise from alternative trafficking of a single protein precursor, one that is targeted to the endolysosomal compartment, whereas the other is released extracellularly. However, in response to various forms of stress, lysosomal exocytosis may represent a major source of the secretory form. Functionally, in the lysosomes, converts sphingomyelin to ceramide. Plays an important role in the export of cholesterol from the intraendolysosomal membranes. Also has phospholipase C activities toward 1,2-diacylglycerolphosphocholine and 1,2-diacylglycerolphosphoglycerol. Modulates stress-induced apoptosis through the production of ceramide. When secreted, modulates cell signaling with its ability to reorganize the plasma membrane by converting sphingomyelin to ceramide. Secreted form is increased in response to stress and inflammatory mediators such as IL1B, IFNG or TNF as well as upon infection with bacteria and viruses. Produces the release of ceramide in the outer leaflet of the plasma membrane playing a central role in host defense. Ceramide reorganizes these rafts into larger signaling platforms that are required to internalize bacteria, induce apoptosis and regulate the cytokine response in infected cells. In wounded cells, the lysosomal form is released extracellularly in the presence of Ca(2+) and promotes endocytosis and plasma membrane repair. In terms of biological role, this form is generated following cleavage by CASP7 in the extracellular milieu in response to bacterial infection. It shows increased ability to convert sphingomyelin to ceramide and promotes plasma membrane repair. Plasma membrane repair by ceramide counteracts the action of gasdermin-D (GSDMD) perforin (PRF1) pores that are formed in response to bacterial infection. The sequence is that of Sphingomyelin phosphodiesterase (SMPD1) from Bos taurus (Bovine).